The following is a 620-amino-acid chain: Glutathione-regulated potassium-efflux system protein KefC (620 aa).

A run of 12 helical transmembrane segments spans residues 4–24, 26–46, 54–74, 90–110, 114–134, 149–169, 178–198, 218–238, 270–290, 294–314, 327–347, and 359–379; these read HTLI…PIAV, LGLG…PWGL, SILH…GLEL, GALQ…FLGL, VAEL…MQAM, FAVL…IPLL, MGAF…VVLL, VFSA…EEVG, GLLL…GTLL, LRIV…LWLI, WFAV…GAAQ, and SLTL…VILN. Positions 399 to 518 constitute an RCK N-terminal domain; that stretch reads QPRVIIAGFG…AGVEKPERET (120 aa). Residues 597–620 form a disordered region; that stretch reads GWQGTEEGKHTGNMADEPETKPSS.

This sequence belongs to the monovalent cation:proton antiporter 2 (CPA2) transporter (TC 2.A.37) family. KefC subfamily. Homodimer. Interacts with the regulatory subunit KefF.

The protein resides in the cell inner membrane. In terms of biological role, pore-forming subunit of a potassium efflux system that confers protection against electrophiles. Catalyzes K(+)/H(+) antiport. This chain is Glutathione-regulated potassium-efflux system protein KefC, found in Escherichia fergusonii (strain ATCC 35469 / DSM 13698 / CCUG 18766 / IAM 14443 / JCM 21226 / LMG 7866 / NBRC 102419 / NCTC 12128 / CDC 0568-73).